The primary structure comprises 307 residues: Putative transcription factor bHLH086 (307 aa).

Disordered stretches follow at residues 1-49 (MSLI…DHQN) and 167-215 (HEST…QSLA). Composition is skewed to polar residues over residues 12–28 (NYIS…SPQN) and 183–197 (GENT…SGTN). The interval 207 to 220 (SPKDPQSLAAKNRR) is basic motif. The region spanning 207–256 (SPKDPQSLAAKNRRERISERLKVLQELVPNGTKVDLVTMLEKAIGYVKFL) is the bHLH domain. The segment at 221–256 (ERISERLKVLQELVPNGTKVDLVTMLEKAIGYVKFL) is helix-loop-helix motif.

Homodimer. Forms heterodimers with RHD6. Interacts with TIFY10B/JAZ2, TIFY6A/JAZ4, TIFY5A/JAZ8, TIFY7/JAZ9 and TIFY9/JAZ10.

The protein localises to the nucleus. Transcription factor that is specifically required for the development of root hairs. Acts with RHD6 to positively regulate root hair development. Acts downstream of genes that regulate epidermal pattern formation, such as GL2. Acts with RHD6 as transcription factor that integrates a jasmonate (JA) signaling pathway that stimulates root hair growth. In Arabidopsis thaliana (Mouse-ear cress), this protein is Putative transcription factor bHLH086.